Here is a 387-residue protein sequence, read N- to C-terminus: MLGGLYGDLPPPTDDEKPSGNSSSVWSSSTKMAPPTLRKPPAFAPPQTILRPLNKPKPIVSAPYKPPPPSNSSQSVLIPANESAPSHQPALVGVTSSVIEEYDPARPNDYEEYKREKKRKATEAEMKREMDKRRQEDEERDKREREEREKERERDNSDPSRLNISGEEAWKRRAAMSGGGSGGKGRSSSPPGNVDGFSIGKSETSGLGVGAGGQMTAAQRMMAKMGWKQGQGLGKSEQGITTPLMAKKTDRRAGVIVNASENKSSSAEKKVVKSVNINGEPTRVLLLRNMVGPGQVDDELEDEVGGECGKYGTVTRVLIFEITEPNFPVHEAVRIFVQFSRPEETTKALVDLDGRYFGGRTVRATFYDEEKFSKNELAPVPGEIPGY.

The interval 1-213 is disordered; it reads MLGGLYGDLP…TSGLGVGAGG (213 aa). A compositionally biased stretch (low complexity) spans 19–29; that stretch reads SGNSSSVWSSS. Positions 103 to 158 are enriched in basic and acidic residues; that stretch reads DPARPNDYEEYKREKKRKATEAEMKREMDKRRQEDEERDKREREEREKERERDNSD. The 47-residue stretch at 214–260 folds into the G-patch domain; it reads QMTAAQRMMAKMGWKQGQGLGKSEQGITTPLMAKKTDRRAGVIVNAS. One can recognise an RRM domain in the interval 283–369; the sequence is RVLLLRNMVG…RTVRATFYDE (87 aa).

In terms of assembly, component of the SWAP1-SFPS-RRC1 splicing factor complex which modulates pre-mRNA splicing to promote photomorphogenesis. Interacts with SWAP1 in a light-independent manner. Associates with the photoreceptor phytochrome B (phyB) in nuclear photobodies upon response to red light. Binds to the splicing factor 1 SF1, involved in 3' splicing site recognition. In terms of tissue distribution, expressed ubiquitously with highest levels in dry seeds and in cells surrounding the base of trichomes and guard cells.

Its subcellular location is the nucleus. It is found in the nucleus speckle. Functionally, as a member of the SWAP1-SFPS-RRC1 splicing factor complex, modulates photomorphogenesis by regulating the gene expression and pre-messenger RNA (mRNA) alternative splicing of a large number of genes, including those involved in plant responses to light signaling, probably by helping in the 3' splice site determination. Associates with and regulates EARLY FLOWERING 3 (ELF3) mRNA processing, a key component of the circadian clock also involved in photomorphogenesis. Required for light-regulated (red, far-red and blue lights) photomorphogenesis in a PHYB- and PHYTOCHROME INTERACTING FACTORS- (PIFs) dependent manner. Promotes flowering under both short (SD) and long days (LD). Controls abscisic acid (ABA) sensitivity during seed development, stomatal responsiveness and germination by monitoring ABI3 splicing, upstream of the splicing factor SUPPRESSOR OF ABI3-ABI5. Seems to be involved in the resistance to UV light and chemical DNA-damaging agents. The sequence is that of DNA-damage-repair/toleration protein 111 from Arabidopsis thaliana (Mouse-ear cress).